The primary structure comprises 395 residues: MSLVDLGKKLLEAARAGQDDEVRILMANGAPFTTDWLGTSPLHLAAQYGHYSTTEVLLRAGVSRDARTKVDRTPLHMAASEGHASIVEVLLKHGADVNAKDMLKMTALHWATEHNHQEVVELLIKYGADVHTQSKFCKTAFDISIDNGNEDLAEILQIAMQNQINTNPESPDTVTIHAATPQFIIGPGGVVNLTGLVSSENSSKATDETGVSAVQFGNSSTSVLATLAALAEASAPLSNSSETPVVATEEVVTAESVDGAIQQVVSSGGQQVITIVTDGIQLGNLHSIPTSGIGQPIIVTMPDGQQVLTVPATDIAEETVISEEPPAKRQCIEIIENRVESAEIEEREALQKQLDEANREAQKYRQQLLKKEQEAEAYRQKLEAMTRLQTNKEAV.

S2 bears the N-acetylserine mark. ANK repeat units follow at residues D5 to T34 and L37 to A66. Position 69 is an N6-acetyllysine (K69). ANK repeat units follow at residues V70 to A99, L103 to T132, and F136 to T166. Residues D258–A327 form a transcription activation and HCFC1 interaction region. Residues K352 and K381 each carry the N6-acetyllysine modification.

As to quaternary structure, heterotetramer of two alpha and two beta subunits. Interacts with HCFC1, causing repression of transcriptional activity. In terms of processing, acetylated by EP300/p300. Deacetylated by SIRT7, promoting heterotetramerization and activity.

The protein resides in the nucleus. Its function is as follows. Transcription factor capable of interacting with purine rich repeats (GA repeats). Acts as a master regulator of nuclear-encoded mitochondrial genes. Functionally, (Microbial infection) Necessary for the expression of the Adenovirus E4 gene. This is GA-binding protein subunit beta-1 (GABPB1) from Homo sapiens (Human).